A 381-amino-acid polypeptide reads, in one-letter code: tRNA pseudouridine synthase D (381 aa).

Asp81 (nucleophile) is an active-site residue. The TRUD domain occupies Gly160–Val335.

The protein belongs to the pseudouridine synthase TruD family.

The enzyme catalyses uridine(13) in tRNA = pseudouridine(13) in tRNA. Its function is as follows. Responsible for synthesis of pseudouridine from uracil-13 in transfer RNAs. In Helicobacter pylori (strain ATCC 700392 / 26695) (Campylobacter pylori), this protein is tRNA pseudouridine synthase D.